We begin with the raw amino-acid sequence, 294 residues long: Fructose-bisphosphate aldolase class 1 (294 aa).

The active-site Proton acceptor is the E176. Catalysis depends on K213, which acts as the Schiff-base intermediate with dihydroxyacetone-P.

The protein belongs to the class I fructose-bisphosphate aldolase family.

The enzyme catalyses beta-D-fructose 1,6-bisphosphate = D-glyceraldehyde 3-phosphate + dihydroxyacetone phosphate. Its pathway is carbohydrate degradation; glycolysis; D-glyceraldehyde 3-phosphate and glycerone phosphate from D-glucose: step 4/4. In Oceanobacillus iheyensis (strain DSM 14371 / CIP 107618 / JCM 11309 / KCTC 3954 / HTE831), this protein is Fructose-bisphosphate aldolase class 1.